The sequence spans 124 residues: MADLKAFAEQLVNLTVKEVNELATILKEEYGIEPAAAAVAVAAGPAAGAAAAEEKSSFDVVLKSAGAAKLQVVKAVKEACGLGLKEAKDMVDGAPSVVKEGLAKDEAESLKKTLEEAGAEVELK.

This sequence belongs to the bacterial ribosomal protein bL12 family. Homodimer. Part of the ribosomal stalk of the 50S ribosomal subunit. Forms a multimeric L10(L12)X complex, where L10 forms an elongated spine to which 2 to 4 L12 dimers bind in a sequential fashion. Binds GTP-bound translation factors.

Its function is as follows. Forms part of the ribosomal stalk which helps the ribosome interact with GTP-bound translation factors. Is thus essential for accurate translation. The protein is Large ribosomal subunit protein bL12 of Bacteroides fragilis (strain ATCC 25285 / DSM 2151 / CCUG 4856 / JCM 11019 / LMG 10263 / NCTC 9343 / Onslow / VPI 2553 / EN-2).